Reading from the N-terminus, the 110-residue chain is Large ribosomal subunit protein uL22 (110 aa).

Belongs to the universal ribosomal protein uL22 family. As to quaternary structure, part of the 50S ribosomal subunit.

Its function is as follows. This protein binds specifically to 23S rRNA; its binding is stimulated by other ribosomal proteins, e.g. L4, L17, and L20. It is important during the early stages of 50S assembly. It makes multiple contacts with different domains of the 23S rRNA in the assembled 50S subunit and ribosome. Functionally, the globular domain of the protein is located near the polypeptide exit tunnel on the outside of the subunit, while an extended beta-hairpin is found that lines the wall of the exit tunnel in the center of the 70S ribosome. This chain is Large ribosomal subunit protein uL22, found in Vibrio parahaemolyticus serotype O3:K6 (strain RIMD 2210633).